Consider the following 100-residue polypeptide: Small ribosomal subunit protein uS14c (100 aa).

Belongs to the universal ribosomal protein uS14 family. In terms of assembly, part of the 30S ribosomal subunit.

Its subcellular location is the plastid. The protein resides in the chloroplast. Its function is as follows. Binds 16S rRNA, required for the assembly of 30S particles. This is Small ribosomal subunit protein uS14c from Pelargonium hortorum (Common geranium).